The following is a 333-amino-acid chain: Adenosine deaminase (333 aa).

2 residues coordinate Zn(2+): H12 and H14. Substrate contacts are provided by H14, D16, and G170. Residue H197 participates in Zn(2+) binding. Residue E200 is the Proton donor of the active site. Position 278 (D278) interacts with Zn(2+). D279 contributes to the substrate binding site.

It belongs to the metallo-dependent hydrolases superfamily. Adenosine and AMP deaminases family. Adenosine deaminase subfamily. The cofactor is Zn(2+).

The enzyme catalyses adenosine + H2O + H(+) = inosine + NH4(+). It carries out the reaction 2'-deoxyadenosine + H2O + H(+) = 2'-deoxyinosine + NH4(+). In terms of biological role, catalyzes the hydrolytic deamination of adenosine and 2-deoxyadenosine. In Escherichia coli O139:H28 (strain E24377A / ETEC), this protein is Adenosine deaminase.